We begin with the raw amino-acid sequence, 223 residues long: Endonuclease NucS (223 aa).

Belongs to the NucS endonuclease family.

The protein localises to the cytoplasm. Functionally, cleaves both 3' and 5' ssDNA extremities of branched DNA structures. This Mycobacterium sp. (strain JLS) protein is Endonuclease NucS.